Consider the following 178-residue polypeptide: GTP-dependent dephospho-CoA kinase (178 aa).

Residues Asp-48, Ile-49, Asp-67, Lys-69, and Glu-126 each contribute to the GTP site.

Belongs to the GTP-dependent DPCK family.

The catalysed reaction is 3'-dephospho-CoA + GTP = GDP + CoA + H(+). It functions in the pathway cofactor biosynthesis; coenzyme A biosynthesis. Its function is as follows. Catalyzes the GTP-dependent phosphorylation of the 3'-hydroxyl group of dephosphocoenzyme A to form coenzyme A (CoA). The chain is GTP-dependent dephospho-CoA kinase from Methanothrix thermoacetophila (strain DSM 6194 / JCM 14653 / NBRC 101360 / PT) (Methanosaeta thermophila).